Here is a 417-residue protein sequence, read N- to C-terminus: Histidine--tRNA ligase (417 aa).

Belongs to the class-II aminoacyl-tRNA synthetase family. In terms of assembly, homodimer.

The protein resides in the cytoplasm. It carries out the reaction tRNA(His) + L-histidine + ATP = L-histidyl-tRNA(His) + AMP + diphosphate + H(+). In Oleidesulfovibrio alaskensis (strain ATCC BAA-1058 / DSM 17464 / G20) (Desulfovibrio alaskensis), this protein is Histidine--tRNA ligase.